A 132-amino-acid polypeptide reads, in one-letter code: Small ribosomal subunit protein uS12 (132 aa).

At Asp89 the chain carries 3-methylthioaspartic acid. The disordered stretch occupies residues 102-132; that stretch reads LDTSGVADRKQSRSKYGAKVPKAGAAPAKKK. The span at 118–132 shows a compositional bias: low complexity; the sequence is GAKVPKAGAAPAKKK.

This sequence belongs to the universal ribosomal protein uS12 family. As to quaternary structure, part of the 30S ribosomal subunit. Contacts proteins S8 and S17. May interact with IF1 in the 30S initiation complex.

Its function is as follows. With S4 and S5 plays an important role in translational accuracy. In terms of biological role, interacts with and stabilizes bases of the 16S rRNA that are involved in tRNA selection in the A site and with the mRNA backbone. Located at the interface of the 30S and 50S subunits, it traverses the body of the 30S subunit contacting proteins on the other side and probably holding the rRNA structure together. The combined cluster of proteins S8, S12 and S17 appears to hold together the shoulder and platform of the 30S subunit. This chain is Small ribosomal subunit protein uS12, found in Chlorobaculum tepidum (strain ATCC 49652 / DSM 12025 / NBRC 103806 / TLS) (Chlorobium tepidum).